A 145-amino-acid polypeptide reads, in one-letter code: Large ribosomal subunit protein bL17 (145 aa).

This sequence belongs to the bacterial ribosomal protein bL17 family. Part of the 50S ribosomal subunit. Contacts protein L32.

The protein is Large ribosomal subunit protein bL17 of Orientia tsutsugamushi (strain Boryong) (Rickettsia tsutsugamushi).